Consider the following 577-residue polypeptide: Methionine--tRNA ligase, mitochondrial (577 aa).

The 'HIGH' region motif lies at proline 25–histidine 37. A 'KMSKS' region motif is present at residues lysine 329–serine 333. Residue lysine 332 participates in ATP binding.

This sequence belongs to the class-I aminoacyl-tRNA synthetase family.

Its subcellular location is the mitochondrion matrix. It carries out the reaction tRNA(Met) + L-methionine + ATP = L-methionyl-tRNA(Met) + AMP + diphosphate. The protein is Methionine--tRNA ligase, mitochondrial (MSM1) of Candida albicans (Yeast).